Reading from the N-terminus, the 370-residue chain is Selenide, water dikinase 2 (370 aa).

The active site involves Sec-24. Position 24 (Sec-24) is a non-standard amino acid, selenocysteine. ATP is bound by residues Lys-27, 55–57, Asp-76, and Asp-99; that span reads GMD. Asp-57 contributes to the Mg(2+) binding site. Mg(2+)-binding residues include Asp-99 and Asp-258.

Belongs to the selenophosphate synthase 1 family. Class I subfamily. In terms of assembly, homodimer. Requires Mg(2+) as cofactor. In terms of tissue distribution, first expressed in the midgut anlagen with subsequent expression in a variety of tissues including the gut and nervous system.

The catalysed reaction is hydrogenselenide + ATP + H2O = selenophosphate + AMP + phosphate + 2 H(+). Functionally, synthesizes selenophosphate from selenide and ATP. In Drosophila melanogaster (Fruit fly), this protein is Selenide, water dikinase 2 (Sps2).